Consider the following 394-residue polypeptide: LL-diaminopimelate aminotransferase (394 aa).

Tyr14 and Gly41 together coordinate substrate. Residues Tyr71, Ala104–Lys105, Tyr128, Asn174, Tyr205, and Ser233–Ser235 contribute to the pyridoxal 5'-phosphate site. Substrate-binding residues include Lys105, Tyr128, and Asn174. Position 236 is an N6-(pyridoxal phosphate)lysine (Lys236). Residues Arg244 and Asn275 each contribute to the pyridoxal 5'-phosphate site. Substrate contacts are provided by Asn275 and Arg369.

It belongs to the class-I pyridoxal-phosphate-dependent aminotransferase family. LL-diaminopimelate aminotransferase subfamily. Homodimer. Requires pyridoxal 5'-phosphate as cofactor.

It catalyses the reaction (2S,6S)-2,6-diaminopimelate + 2-oxoglutarate = (S)-2,3,4,5-tetrahydrodipicolinate + L-glutamate + H2O + H(+). The protein operates within amino-acid biosynthesis; L-lysine biosynthesis via DAP pathway; LL-2,6-diaminopimelate from (S)-tetrahydrodipicolinate (aminotransferase route): step 1/1. In terms of biological role, involved in the synthesis of meso-diaminopimelate (m-DAP or DL-DAP), required for both lysine and peptidoglycan biosynthesis. Catalyzes the direct conversion of tetrahydrodipicolinate to LL-diaminopimelate. The chain is LL-diaminopimelate aminotransferase from Chlamydia trachomatis serovar L2b (strain UCH-1/proctitis).